Reading from the N-terminus, the 726-residue chain is Methionine--tRNA ligase (726 aa).

The 'HIGH' region motif lies at 12–22; the sequence is PYVNNIPHLGN. 4 residues coordinate Zn(2+): C143, C146, C155, and C158. The 'KMSKS' region signature appears at 330-334; it reads KFSKS. K333 provides a ligand contact to ATP. The region spanning 562–667 is the tRNA-binding domain; it reads FSEQICLKTV…DNPIPGERVI (106 aa).

Belongs to the class-I aminoacyl-tRNA synthetase family. MetG type 1 subfamily. As to quaternary structure, homodimer. It depends on Zn(2+) as a cofactor.

The protein resides in the cytoplasm. It catalyses the reaction tRNA(Met) + L-methionine + ATP = L-methionyl-tRNA(Met) + AMP + diphosphate. Its function is as follows. Is required not only for elongation of protein synthesis but also for the initiation of all mRNA translation through initiator tRNA(fMet) aminoacylation. This Borrelia recurrentis (strain A1) protein is Methionine--tRNA ligase.